The sequence spans 336 residues: Dihydrolipoyl dehydrogenase (336 aa).

FAD is bound by residues 34–42 (EKEVVGGIC), Lys51, and Gly115. Residues Cys42 and Cys47 are joined by a disulfide bond. NAD(+)-binding positions include 180-184 (GGGVI), Glu203, Val237, and 264-267 (SVGT). Residues Asp304 and Ala312 each contribute to the FAD site.

It belongs to the class-I pyridine nucleotide-disulfide oxidoreductase family. In terms of assembly, homodimer. Requires FAD as cofactor.

Its subcellular location is the cytoplasm. It carries out the reaction N(6)-[(R)-dihydrolipoyl]-L-lysyl-[protein] + NAD(+) = N(6)-[(R)-lipoyl]-L-lysyl-[protein] + NADH + H(+). Its function is as follows. Lipoamide dehydrogenase is a component of the alpha-ketoacid dehydrogenase complexes. In Acholeplasma laidlawii, this protein is Dihydrolipoyl dehydrogenase (pdhD).